The following is an 891-amino-acid chain: Valine--tRNA ligase (891 aa).

A 'HIGH' region motif is present at residues 43–53; it reads PFTSGTLHLGH. Residues 536–540 carry the 'KMSKS' region motif; that stretch reads KMSKS. ATP is bound at residue Lys539.

This sequence belongs to the class-I aminoacyl-tRNA synthetase family. ValS type 2 subfamily.

The protein localises to the cytoplasm. It catalyses the reaction tRNA(Val) + L-valine + ATP = L-valyl-tRNA(Val) + AMP + diphosphate. Functionally, catalyzes the attachment of valine to tRNA(Val). As ValRS can inadvertently accommodate and process structurally similar amino acids such as threonine, to avoid such errors, it has a 'posttransfer' editing activity that hydrolyzes mischarged Thr-tRNA(Val) in a tRNA-dependent manner. The protein is Valine--tRNA ligase of Pyrococcus horikoshii (strain ATCC 700860 / DSM 12428 / JCM 9974 / NBRC 100139 / OT-3).